A 358-amino-acid polypeptide reads, in one-letter code: MKALARFGKAFGGYKMIDVPQPMCGPEDVVIEIKAAAICGADMKHYNVDSGSDEFNSIRGHEFAGCIAQVGEKVKDWKVGQRVVSDNSGHVCGVCPACEQGDFLCCTEKVNLGLDNNTWGGGFSKYCLVPGEILKIHRHALWEIPDGVDYEDAAVLDPICNAYKSIAQQSKFLPGQDVVVIGTGPLGLFSVQMARIMGAVNIVVVGLQEDVAVRFPVAKELGATAVVNGSTEDVVARCQQICGKDNLGLVIECSGANIALKQAIEMLRPNGEVVRVGMGFKPLDFSINDITAWNKSIIGHMAYDSTSWRNAIRLLASGAIKVKPMITHRIGLSQWREGFDAMVDKTAIKVIMTYDFDE.

Positions 39, 61, 92, 95, 98, 106, and 157 each coordinate Zn(2+).

This sequence belongs to the zinc-containing alcohol dehydrogenase family. Zn(2+) serves as cofactor.

This is an uncharacterized protein from Escherichia coli (strain K12).